The sequence spans 492 residues: Protein nucleotidyltransferase YdiU (492 aa).

G88, G90, R91, K111, D123, G124, R174, and R181 together coordinate ATP. D250 serves as the catalytic Proton acceptor. Mg(2+)-binding residues include N251 and D260. D260 lines the ATP pocket.

This sequence belongs to the SELO family. The cofactor is Mg(2+). Requires Mn(2+) as cofactor.

The catalysed reaction is L-seryl-[protein] + ATP = 3-O-(5'-adenylyl)-L-seryl-[protein] + diphosphate. The enzyme catalyses L-threonyl-[protein] + ATP = 3-O-(5'-adenylyl)-L-threonyl-[protein] + diphosphate. It catalyses the reaction L-tyrosyl-[protein] + ATP = O-(5'-adenylyl)-L-tyrosyl-[protein] + diphosphate. It carries out the reaction L-histidyl-[protein] + UTP = N(tele)-(5'-uridylyl)-L-histidyl-[protein] + diphosphate. The catalysed reaction is L-seryl-[protein] + UTP = O-(5'-uridylyl)-L-seryl-[protein] + diphosphate. The enzyme catalyses L-tyrosyl-[protein] + UTP = O-(5'-uridylyl)-L-tyrosyl-[protein] + diphosphate. Functionally, nucleotidyltransferase involved in the post-translational modification of proteins. It can catalyze the addition of adenosine monophosphate (AMP) or uridine monophosphate (UMP) to a protein, resulting in modifications known as AMPylation and UMPylation. The polypeptide is Protein nucleotidyltransferase YdiU (Rhodopseudomonas palustris (strain HaA2)).